The chain runs to 437 residues: MNKKSYINHYLTLFKVTTLLFTLSSNPVWANIKTVQGTTSGFPLLTRTFTFNGNLQWNVSALQPAYIVSSQARDNLDTVHIQSSEINAPTNSLAPFNNWINTKSAVELGYSFAGITCTSNPCPTMKLPLLFHPDLTNLTPPGKKNSDGGEIFKLHNESNLGVSFQIGVKTNTSLDWVNAKNNFSSLKVLMVPFNSSDKISLHLRAKFHLLTDFSSLNNDITIDPMNTSIGKINLETWRGSTGNFSVKYVGEDKGDISIFFNTPKIILKKQQRRCTLNNAPVSPNPVKLRAVKKRELEAQSEMEGGTFQLRVNCDNTTYNKANGKWLFPVVKVTFTDEDGTTNNGTNDLLRTQTGSGQATGVSLRIKRENGTETVKYGADSAQMGNAGQFELRKQPSPAGGDQYAEETFKVYYVKDSTRGTLIEGKVKAAATFTMSYQ.

Residues 1–30 (MNKKSYINHYLTLFKVTTLLFTLSSNPVWA) form the signal peptide.

Belongs to the fimbrial protein family.

It is found in the fimbrium. Functionally, may be a minor structural protein required for pilus biogenesis. May be the adhesive component in the pili. The chain is Minor fimbrial subunit HifE (hifE) from Haemophilus influenzae.